Reading from the N-terminus, the 467-residue chain is Cytochrome P450 monooxygenase azaI (467 aa).

The signal sequence occupies residues Met-1–Ala-28. Cys-411 lines the heme pocket.

Belongs to the cytochrome P450 family. Heme is required as a cofactor.

Its pathway is secondary metabolite biosynthesis. Functionally, cytochrome P450 monooxygenase; part of the gene cluster that mediates the biosynthesis of azaphilones, a class of fungal metabolites characterized by a highly oxygenated pyrano-quinone bicyclic core and exhibiting a broad range of bioactivities. In the first step, the non-reducing polyketide synthase azaA forms the hexaketide precursor from successive condensations of five malonyl-CoA units, presumably with a simple acetyl-CoA starter unit. The reactive polyketide chain then undergoes a PT-mediated C2-C7 cyclization to afford the aromatic ring and is eventually released as an aldehyde through the R-domain. The putative ketoreductase azaE is proposed to catalyze the reduction of the terminal ketone resulting in the early culture product FK17-P2a. The monooxygenase azaH was demonstrated to be the only enzyme required to convert FK17-P2a to azanigerone E. AzaH first hydroxylates the benzaldehyde intermediate FK17-P2a at C4, which triggers the formation of the pyran-ring to afford azanigerone E. In parallel, the 2,4-dimethylhexanoyl chain is synthesized by the HR-PKS azaB and is proposed to be transferred to the C4-hydroxyl of azanigerone E by the acyltransferase azaD directly from the ACP domain of azaB. Alternatively, the 2,4-dimethyl-hexanoyl chain may be offloaded from the HR-PKS as a carboxylic acid and converted to an acyl-CoA by azaF. The resulting acyl-CoA molecule could then be taken up as a substrate by AzaD to form azanigerone B. To yield the carboxylic acid substituent in azanigerone A, the hydroxypropyl side chain of azanigerone B would need to undergo a C-C oxidative cleavage catalyzed by cytochrome P450 AzaI. AzaI is proposed to act on a vicinal diol that leads to a C-C bond scission either through an alkoxyradical intermediate or a peroxy complex. In the biosynthesis of azanigerone A, azanigerone B first undergoes hydroxylation at C10, possibly catalyzed by one of the two FAD-dependent monooxygenases encoded in the cluster, azaG or azaL, resulting in the vicinal diol azanigerone C. Oxidative cleavage of azanigerone C by azaI would yield the corresponding aldehyde derivative of azanigerone A. Finally, the dehydrogenase azaJ is proposed to convert the aldehyde functional group into the carboxylic acid, completing the conversion from azanigerone B to azanigerone A. Alternatively, the oxidation of aldehyde to carboxylic acid may be catalyzed by the same P450 enzyme azaI via consecutive oxidation or by endogenous alcohol dehydrogenase. The protein is Cytochrome P450 monooxygenase azaI of Aspergillus niger (strain ATCC 1015 / CBS 113.46 / FGSC A1144 / LSHB Ac4 / NCTC 3858a / NRRL 328 / USDA 3528.7).